Reading from the N-terminus, the 257-residue chain is Imidazole glycerol phosphate synthase subunit HisF (257 aa).

Active-site residues include Asp11 and Asp130.

The protein belongs to the HisA/HisF family. Heterodimer of HisH and HisF.

It localises to the cytoplasm. The enzyme catalyses 5-[(5-phospho-1-deoxy-D-ribulos-1-ylimino)methylamino]-1-(5-phospho-beta-D-ribosyl)imidazole-4-carboxamide + L-glutamine = D-erythro-1-(imidazol-4-yl)glycerol 3-phosphate + 5-amino-1-(5-phospho-beta-D-ribosyl)imidazole-4-carboxamide + L-glutamate + H(+). Its pathway is amino-acid biosynthesis; L-histidine biosynthesis; L-histidine from 5-phospho-alpha-D-ribose 1-diphosphate: step 5/9. In terms of biological role, IGPS catalyzes the conversion of PRFAR and glutamine to IGP, AICAR and glutamate. The HisF subunit catalyzes the cyclization activity that produces IGP and AICAR from PRFAR using the ammonia provided by the HisH subunit. The chain is Imidazole glycerol phosphate synthase subunit HisF from Shewanella sediminis (strain HAW-EB3).